The following is a 145-amino-acid chain: Basic phospholipase A2 BFPA (145 aa).

Positions 1–27 (MNPAHLLVLLAVCVSLLGAANIPPQSL) are cleaved as a signal peptide. 7 disulfides stabilise this stretch: Cys-38/Cys-97, Cys-52/Cys-144, Cys-54/Cys-70, Cys-69/Cys-125, Cys-76/Cys-118, Cys-86/Cys-111, and Cys-104/Cys-116. Positions 53, 55, and 57 each coordinate Ca(2+). The active site involves His-73. Asp-74 contributes to the Ca(2+) binding site. Asp-119 is an active-site residue.

It belongs to the phospholipase A2 family. Group I subfamily. D49 sub-subfamily. In terms of assembly, homodimer; disulfide-linked. It depends on Ca(2+) as a cofactor. Expressed by the venom gland.

It localises to the secreted. It catalyses the reaction a 1,2-diacyl-sn-glycero-3-phosphocholine + H2O = a 1-acyl-sn-glycero-3-phosphocholine + a fatty acid + H(+). Its function is as follows. Snake venom phospholipase A2 (PLA2) that inhibits blood coagulation and shows bactericidal activities against both Gram-negative and -positive bacteria (E.coli, MIC=0.4 uM and S.aureus, MIC=0.1 uM). PLA2 catalyzes the calcium-dependent hydrolysis of the 2-acyl groups in 3-sn-phosphoglycerides. The sequence is that of Basic phospholipase A2 BFPA from Bungarus fasciatus (Banded krait).